We begin with the raw amino-acid sequence, 134 residues long: Thyrotropin subunit beta (134 aa).

The N-terminal stretch at 1–16 (MSPFFMMSLLFGLTFG) is a signal peptide. 6 disulfide bridges follow: Cys22-Cys72, Cys36-Cys87, Cys39-Cys125, Cys47-Cys103, Cys51-Cys105, and Cys108-Cys115. Asn43 carries N-linked (GlcNAc...) asparagine glycosylation.

This sequence belongs to the glycoprotein hormones subunit beta family. As to quaternary structure, heterodimer of a common alpha chain and a unique beta chain which confers biological specificity to thyrotropin, lutropin, follitropin and gonadotropin.

Its subcellular location is the secreted. In terms of biological role, indispensable for the control of thyroid structure and metabolism. The chain is Thyrotropin subunit beta (TSHB) from Gallus gallus (Chicken).